The sequence spans 71 residues: Small ribosomal subunit protein bS21 (71 aa).

Belongs to the bacterial ribosomal protein bS21 family.

This chain is Small ribosomal subunit protein bS21, found in Ruthia magnifica subsp. Calyptogena magnifica.